The following is a 524-amino-acid chain: 2-isopropylmalate synthase (524 aa).

Residues 5-267 form the Pyruvate carboxyltransferase domain; that stretch reads VIIFDTTLRD…HTNIRHSEIH (263 aa). Mn(2+) is bound by residues Asp14, His202, His204, and Asn238. A regulatory domain region spans residues 392-524; that stretch reads KLEYLGVQSG…KTDKINTESV (133 aa).

It belongs to the alpha-IPM synthase/homocitrate synthase family. LeuA type 1 subfamily. As to quaternary structure, homodimer. Mn(2+) serves as cofactor.

Its subcellular location is the cytoplasm. The enzyme catalyses 3-methyl-2-oxobutanoate + acetyl-CoA + H2O = (2S)-2-isopropylmalate + CoA + H(+). It participates in amino-acid biosynthesis; L-leucine biosynthesis; L-leucine from 3-methyl-2-oxobutanoate: step 1/4. Its function is as follows. Catalyzes the condensation of the acetyl group of acetyl-CoA with 3-methyl-2-oxobutanoate (2-ketoisovalerate) to form 3-carboxy-3-hydroxy-4-methylpentanoate (2-isopropylmalate). This is 2-isopropylmalate synthase from Aeromonas hydrophila subsp. hydrophila (strain ATCC 7966 / DSM 30187 / BCRC 13018 / CCUG 14551 / JCM 1027 / KCTC 2358 / NCIMB 9240 / NCTC 8049).